Here is a 400-residue protein sequence, read N- to C-terminus: Nucleoside permease NupC (400 aa).

The Cytoplasmic portion of the chain corresponds to 1–3 (MDR). Residues 4–24 (VLHFVLALAVVAILALLVSSD) traverse the membrane as a helical segment. The Periplasmic segment spans residues 25–36 (RKKIRIRYVIQL). The helical transmembrane segment at 37 to 57 (LVIEVLLAWFFLNSDVGLGFV) threads the bilayer. Topologically, residues 58–86 (KGFSEMFEKLLGFANEGTNFVFGSMNDQG) are cytoplasmic. Residues 87–107 (LAFFFLKVLCPIVFISALIGI) traverse the membrane as a helical segment. Residues 108–168 (LQHIRVLPVI…GKISRNRMYT (61 aa)) lie on the Periplasmic side of the membrane. The chain crosses the membrane as a helical span at residues 169–189 (MAATAMSTVSMSIVGAYMTML). The Cytoplasmic segment spans residues 190–192 (EPK). Residues 193-213 (YVVAALVLNMFSTFIVLSLIN) form a helical membrane-spanning segment. The Periplasmic segment spans residues 214–250 (PYRVDASEENIQMSNLHEGQSFFEMLGEYILAGFKVA). Residues 251–271 (IIVAAMLIGFIALIAALNALF) form a helical membrane-spanning segment. Residues 272 to 281 (ATVTGWFGYS) are Cytoplasmic-facing. The chain crosses the membrane as a helical span at residues 282–302 (ISFQGILGYIFYPIAWVMGVP). Topologically, residues 303–341 (SSEALQVGSIMATKLVSNEFVAMMDLQKIASTLSPRAEG) are periplasmic. Residues 342-362 (IISVFLVSFANFSSIGIIAGA) traverse the membrane as a helical segment. Residues 363–378 (VKGLNEEQGNVVSRFG) lie on the Cytoplasmic side of the membrane. A helical membrane pass occupies residues 379 to 399 (LKLVYGSTLVSVLSASIAALV). Position 400 (Leu400) is a topological domain, periplasmic.

It belongs to the concentrative nucleoside transporter (CNT) (TC 2.A.41) family.

The protein resides in the cell inner membrane. It catalyses the reaction adenosine(in) + H(+)(in) = adenosine(out) + H(+)(out). The enzyme catalyses uridine(in) + H(+)(in) = uridine(out) + H(+)(out). It carries out the reaction thymidine(in) + H(+)(in) = thymidine(out) + H(+)(out). The catalysed reaction is cytidine(in) + H(+)(in) = cytidine(out) + H(+)(out). It catalyses the reaction 2'-deoxycytidine(in) + H(+)(in) = 2'-deoxycytidine(out) + H(+)(out). Transport is inhibited by the proton uncoupler dinitrophenol. Inhibited by the nucleoside antibiotic showdomycin. Functionally, nucleoside transport protein that can transport adenosine, uridine, thymidine, cytidine and deoxycytidine. Shows weak activity with inosine and xanthosine. Transport is driven by a proton motive force. Does not transport guanosine, deoxyguanosine, hypoxanthine or uracil. Also shows activity with the chemotherapeutic drugs 3'-azido-3'-deoxythymidine (AZT), 2',3'- dideoxycytidine (ddC) and 2'-deoxy-2',2'-difluorocytidine (gemcitabine). The sequence is that of Nucleoside permease NupC from Escherichia coli (strain K12).